The primary structure comprises 376 residues: 2-aminoethylphosphonate--pyruvate transaminase 2 (376 aa).

Lysine 194 is modified (N6-(pyridoxal phosphate)lysine).

The protein belongs to the class-V pyridoxal-phosphate-dependent aminotransferase family. PhnW subfamily. In terms of assembly, homodimer. The cofactor is pyridoxal 5'-phosphate.

The catalysed reaction is (2-aminoethyl)phosphonate + pyruvate = phosphonoacetaldehyde + L-alanine. Its function is as follows. Involved in phosphonate degradation. This Burkholderia lata (strain ATCC 17760 / DSM 23089 / LMG 22485 / NCIMB 9086 / R18194 / 383) protein is 2-aminoethylphosphonate--pyruvate transaminase 2.